Here is an 89-residue protein sequence, read N- to C-terminus: UPF0223 protein BPUM_1362 (89 aa).

This sequence belongs to the UPF0223 family.

The chain is UPF0223 protein BPUM_1362 from Bacillus pumilus (strain SAFR-032).